The following is a 55-amino-acid chain: Large ribosomal subunit protein bL33 (55 aa).

Belongs to the bacterial ribosomal protein bL33 family.

The polypeptide is Large ribosomal subunit protein bL33 (Phenylobacterium zucineum (strain HLK1)).